The chain runs to 583 residues: ATP-dependent lipid A-core flippase (583 aa).

7 helical membrane-spanning segments follow: residues 18-38 (LWPI…TLII), 65-85 (IFMW…MSGF), 105-127 (LLFN…ATLM), 143-163 (GALI…IMMF), 167-187 (WQLS…IKLV), 252-272 (VFEP…LYIA), and 277-297 (VIEM…IALM). The 283-residue stretch at 30–312 (IIASITLIIN…LTNVSAQFQR (283 aa)) folds into the ABC transmembrane type-1 domain. The region spanning 344-580 (IIFDNVTFFY…KGVYSQLYKF (237 aa)) is the ABC transporter domain. 378–385 (GRSGSGKS) serves as a coordination point for ATP.

It belongs to the ABC transporter superfamily. Lipid exporter (TC 3.A.1.106) family. As to quaternary structure, homodimer.

The protein resides in the cell inner membrane. It catalyses the reaction ATP + H2O + lipid A-core oligosaccharideSide 1 = ADP + phosphate + lipid A-core oligosaccharideSide 2.. Its function is as follows. Involved in lipopolysaccharide (LPS) biosynthesis. Translocates lipid A-core from the inner to the outer leaflet of the inner membrane. Transmembrane domains (TMD) form a pore in the inner membrane and the ATP-binding domain (NBD) is responsible for energy generation. The protein is ATP-dependent lipid A-core flippase of Blochmanniella floridana.